Consider the following 796-residue polypeptide: Cadherin-11 (796 aa).

The first 24 residues, methionine 1–alanine 24, serve as a signal peptide directing secretion. A propeptide spanning residues leucine 25 to arginine 53 is cleaved from the precursor. 5 consecutive Cadherin domains span residues glycine 54–phenylalanine 159, leucine 160–phenylalanine 268, proline 269–phenylalanine 383, leucine 384–proline 486, and lysine 487–asparagine 612. At glycine 54 to threonine 617 the chain is on the extracellular side. 2 N-linked (GlcNAc...) asparagine glycosylation sites follow: asparagine 455 and asparagine 540. The chain crosses the membrane as a helical span at residues glycine 618–leucine 640. Topologically, residues arginine 641–serine 796 are cytoplasmic. Phosphoserine is present on serine 788. At threonine 791 the chain carries Phosphothreonine.

In terms of assembly, interacts with PCDH8. Selectively expressed in osteoblastic cell lines, precursor cell lines of osteoblasts, and primary osteoblastic cells from calvaria, as well as in lung, testis, and brain tissues at low levels.

Its subcellular location is the cell membrane. Cadherins are calcium-dependent cell adhesion proteins. They preferentially interact with themselves in a homophilic manner in connecting cells; cadherins may thus contribute to the sorting of heterogeneous cell types. Required for proper focal adhesion assembly. Involved in the regulation of cell migration. The polypeptide is Cadherin-11 (Cdh11) (Mus musculus (Mouse)).